Here is a 377-residue protein sequence, read N- to C-terminus: N-acetyldiaminopimelate deacetylase (377 aa).

Asp70 is a catalytic residue. Glu129 serves as the catalytic Proton acceptor.

Belongs to the peptidase M20A family. N-acetyldiaminopimelate deacetylase subfamily.

The enzyme catalyses N-acetyl-(2S,6S)-2,6-diaminopimelate + H2O = (2S,6S)-2,6-diaminopimelate + acetate. The protein operates within amino-acid biosynthesis; L-lysine biosynthesis via DAP pathway; LL-2,6-diaminopimelate from (S)-tetrahydrodipicolinate (acetylase route): step 3/3. In terms of biological role, catalyzes the conversion of N-acetyl-diaminopimelate to diaminopimelate and acetate. In Streptococcus thermophilus (strain ATCC BAA-491 / LMD-9), this protein is N-acetyldiaminopimelate deacetylase.